Consider the following 103-residue polypeptide: Serine rich endogenous peptide 9 (103 aa).

A signal peptide spans 1 to 25 (MENIFFSKLTQVFIVALLCIFIYRT). A disordered region spans residues 54–103 (IYVKPPPLKSKDSNQKGKRGETYYKPNSEIGTGPSHSGHGGSSIEHVSSP). The span at 62-75 (KSKDSNQKGKRGET) shows a compositional bias: basic and acidic residues. Residues 82 to 96 (EIGTGPSHSGHGGSS) carry the SCOOP motif motif. Residues 84-103 (GTGPSHSGHGGSSIEHVSSP) are compositionally biased toward low complexity. Residues 88 to 90 (SHS) carry the SxS motif essential for MIK2 binding motif.

This sequence belongs to the serine rich endogenous peptide (SCOOP) phytocytokine family. Interacts with MIK2 (via extracellular leucine-rich repeat domain); this interaction triggers the formation of complex between MIK2 and the BAK1/SERK3 and SERK4 coreceptors, and subsequent BAK1 activation by phosphorylation. Mostly expressed in seedlings shoots and roots, and, to a lower extent, in leaves, but barely in flowers.

It is found in the cell membrane. Its subcellular location is the secreted. The protein localises to the extracellular space. The protein resides in the apoplast. Functionally, brassicaceae-specific phytocytokine (plant endogenous peptide released into the apoplast) perceived by MIK2 in a BAK1/SERK3 and SERK4 coreceptors-dependent manner, that modulates various physiological and antimicrobial processes including growth prevention and reactive oxygen species (ROS) response regulation. This chain is Serine rich endogenous peptide 9, found in Arabidopsis thaliana (Mouse-ear cress).